A 955-amino-acid polypeptide reads, in one-letter code: Anoctamin-4 (955 aa).

The Cytoplasmic segment spans residues 1–352 (MEASSSGITN…FGEKIGLYFA (352 aa)). Residues 73-97 (KDDDSLLHPGNLTSTSEDTSRLEAG) form a disordered region. A helical transmembrane segment spans residues 353–373 (WLGWYTGMLFPAAFIGLFVFL). The Extracellular segment spans residues 374-424 (YGVTTLDHCQVSKEVCQATDIIMCPVCDKYCPFMRLSDSCVYAKVTHLFDN). A helical transmembrane segment spans residues 425-445 (GATVFFAVFMAVWATVFLEFW). At 446–505 (KRRRAVIAYDWDLIDWEEEEEEIRPQFEAKYSKKERMNPISGKPEPYQAFTDKCSRLIVS) the chain is on the cytoplasmic side. A helical transmembrane segment spans residues 506–526 (ASGIFFMICVVIAAVFGIVIY). The Extracellular segment spans residues 527 to 547 (RVVTVSTFAAFKWALIRNNSQ). Asparagine 544 carries N-linked (GlcNAc...) asparagine glycosylation. Residues 548–568 (VATTGTAVCINFCIIMLLNVL) traverse the membrane as a helical segment. At 569–595 (YEKVALLLTNLEQPRTESEWENSFTLK) the chain is on the cytoplasmic side. The chain crosses the membrane as a helical span at residues 596–616 (MFLFQFVNLNSSTFYIAFFLG). The Extracellular segment spans residues 617–715 (RFTGHPGAYL…AYGLFDEYLE (99 aa)). The chain crosses the membrane as a helical span at residues 716 to 736 (MILQFGFTTIFVAAFPLAPLL). Topologically, residues 737-768 (ALLNNIIEIRLDAYKFVTQWRRPLASRAKDIG) are cytoplasmic. Residues 769–789 (IWYGILEGIGILSVITNAFVI) traverse the membrane as a helical segment. Residues 790–885 (AITSDFIPRL…QFWHVLAARL (96 aa)) lie on the Extracellular side of the membrane. N-linked (GlcNAc...) asparagine glycans are attached at residues asparagine 824 and asparagine 837. The chain crosses the membrane as a helical span at residues 886 to 906 (AFIIVFEHLVFCIKHLISYLI). The Cytoplasmic segment spans residues 907 to 955 (PDLPKDLRDRMRREKYLIQEMMYEAELERLQKERKERKKNGKAHHNEWP).

This sequence belongs to the anoctamin family. As to expression, predominantly expressed in neuronal tissues. Expressed at low levels in ovary, uterus, heart and brain.

It is found in the cell membrane. The enzyme catalyses a 1,2-diacyl-sn-glycero-3-phospho-L-serine(in) = a 1,2-diacyl-sn-glycero-3-phospho-L-serine(out). The catalysed reaction is a beta-D-galactosyl-(1&lt;-&gt;1')-N-acylsphing-4-enine(out) = a beta-D-galactosyl-(1&lt;-&gt;1')-N-acylsphing-4-enine(in). It catalyses the reaction a 1,2-diacyl-sn-glycero-3-phosphocholine(in) = a 1,2-diacyl-sn-glycero-3-phosphocholine(out). Its function is as follows. Has calcium-dependent phospholipid scramblase activity; scrambles phosphatidylserine, phosphatidylcholine and galactosylceramide. Does not exhibit calcium-activated chloride channel (CaCC) activity. The chain is Anoctamin-4 from Mus musculus (Mouse).